A 703-amino-acid polypeptide reads, in one-letter code: Calcium-responsive transcription factor (703 aa).

Disordered stretches follow at residues 1-61 (MEQS…QNIP), 130-150 (GPLV…SDRN), and 517-539 (GNSQ…SLSP). Residues 9–22 (KVNHNDSEESKTDS) are compositionally biased toward basic and acidic residues. The segment covering 23 to 34 (QHLTYMDSSEPS) has biased composition (polar residues).

It localises to the nucleus. In terms of biological role, acts as a transcriptional activator that mediates the calcium- and neuron-selective induction of BDNF exon III transcription. Binds to the consensus calcium-response element CaRE1 5'-CTATTTCGAG-3' sequence. The protein is Calcium-responsive transcription factor (CARF) of Bos taurus (Bovine).